The chain runs to 235 residues: tRNA1(Val) (adenine(37)-N6)-methyltransferase (235 aa).

This sequence belongs to the methyltransferase superfamily. tRNA (adenine-N(6)-)-methyltransferase family.

Its subcellular location is the cytoplasm. It catalyses the reaction adenosine(37) in tRNA1(Val) + S-adenosyl-L-methionine = N(6)-methyladenosine(37) in tRNA1(Val) + S-adenosyl-L-homocysteine + H(+). Specifically methylates the adenine in position 37 of tRNA(1)(Val) (anticodon cmo5UAC). This Glaesserella parasuis serovar 5 (strain SH0165) (Haemophilus parasuis) protein is tRNA1(Val) (adenine(37)-N6)-methyltransferase.